The chain runs to 488 residues: Probable glycine dehydrogenase (decarboxylating) subunit 2 (488 aa).

Lysine 274 is modified (N6-(pyridoxal phosphate)lysine).

Belongs to the GcvP family. C-terminal subunit subfamily. The glycine cleavage system is composed of four proteins: P, T, L and H. In this organism, the P 'protein' is a heterodimer of two subunits. Pyridoxal 5'-phosphate is required as a cofactor.

The catalysed reaction is N(6)-[(R)-lipoyl]-L-lysyl-[glycine-cleavage complex H protein] + glycine + H(+) = N(6)-[(R)-S(8)-aminomethyldihydrolipoyl]-L-lysyl-[glycine-cleavage complex H protein] + CO2. Functionally, the glycine cleavage system catalyzes the degradation of glycine. The P protein binds the alpha-amino group of glycine through its pyridoxal phosphate cofactor; CO(2) is released and the remaining methylamine moiety is then transferred to the lipoamide cofactor of the H protein. The protein is Probable glycine dehydrogenase (decarboxylating) subunit 2 of Listeria innocua serovar 6a (strain ATCC BAA-680 / CLIP 11262).